Here is a 470-residue protein sequence, read N- to C-terminus: MNGAQFELLREYLGRPPTLNQYFIFKPQARAIQRIMRFDTDVFFALIKKNKKRFFARIGGSASEINARVLSYFVKQRATTKVGRILSIIELQSVLVNSYTEIMGVLTLPAPPVYNSVVRLHYCSMERLAEEVLWSYNVAFRSGKVMGRHCVSNLVVHVNKLMSEYLRRHNRTAICYGSYSLHLLNSRIEYGDIDILQTNARLFLINLAFLIYFITGRNVLLLKVPYLKSYIVMQDEEGRHIIDSFNIRQGTMQNVPKVLVDNIYIIDPVVQLMNTLKMLSQIDRLEDLGERMAKMRLRLATLLEYARYHHCVSFGGGARLRLHMRLDAGARIVLVDTRCYGLGYRECRCYLDEARLLQDISKLNADAAVVDFEAVSNSVFLIHQGIMYTYFSNTVLLRSEDAIHDVSERAVCAHITLYHLLVGCNYQELLADLLNSLVSREKCPVVGVVARDKKVGRHGVIDIEKDVITH.

Catalysis depends on residues Asp-192 and Asp-194.

This sequence belongs to the poxviridae poly(A) polymerase catalytic subunit family. Heterodimer of a large (catalytic) subunit and a small (regulatory) subunit.

The catalysed reaction is RNA(n) + ATP = RNA(n)-3'-adenine ribonucleotide + diphosphate. Its function is as follows. Polymerase that creates the 3'-poly(A) tail of mRNA's. The protein is Poly(A) polymerase catalytic subunit (PAPL) of Molluscum contagiosum virus subtype 1 (MOCV).